The primary structure comprises 808 residues: MLRFPTCFPSFRVVGEKQLPQEIIFLVWSPKRDLIALANTAGEVLLHRLASFHRVWSFPPNENTGKEVTCLAWRPDGKLLAFALADTKKIVLCDVEKPESLHSFSVEAPVSCMHWMEVTVESSVLTSFYNAEDESNLLLPKLPTLPKNYSNTSKIFSEENSDEIIKLLGDVRLNILVLGGSSGFIELYAYGMFKIARVTGIAGTCLALCLSSDLKSLSVVTEVSTNGASEVSYFQLETNLLYSFLPEVTRMARKFTHISALLQYINLSLTCMCEAWEEILMQMDSRLTKFVQEKNTTTSVQDEFMHLLLWGKASAELQTLLMNQLTVKGLKKLGQSIESSYSSIQKLVISHLQSGSESLLYHLSELKGMASWKQKYEPLGLDAAGIEEAITAVGSFILKANELLQVIDSSMKNFKAFFRWLYVAMLRMTEDHVLPELNKMTQKDITFVAEFLTEHFNEAPDLYNRKGKYFNVERVGQYLKDEDDDLVSPPNTEGNQWYDFLQNSSHLKESPLLFPYYPRKSLHFVKRRMENIIDQCLQKPADVIGKSMNQAICIPLYRDTRSEDSTRRLFKFPFLWNNKTSNLHYLLFTILEDSLYKMCILRRHTDISQSVSNGLIAIKFGSFTYATTEKVRRSIYSCLDAQFYDDETVTVVLKDTVGREGRDRLLVQLPLSLVYNSEDSAEYQFTGTYSTRLDEQCSAIPTRTMHFEKHWRLLESMKAQYVAGNGFRKVSCVLSSNLRHVRVFEMDIDDEWELDESSDEEEEASNKPVKIKEEVLSESEAENQQAGAAALAPEIVIKVEKLDPELDS.

Tyr-469 carries the post-translational modification Phosphotyrosine. Ser-757 and Ser-758 each carry phosphoserine. A Glycyl lysine isopeptide (Lys-Gly) (interchain with G-Cter in SUMO2) cross-link involves residue Lys-772. Residues Ser-777 and Ser-779 each carry the phosphoserine modification. A Glycyl lysine isopeptide (Lys-Gly) (interchain with G-Cter in SUMO2) cross-link involves residue Lys-798.

This sequence belongs to the APC4 family. The mammalian APC/C is composed at least of 14 distinct subunits ANAPC1, ANAPC2, CDC27/APC3, ANAPC4, ANAPC5, CDC16/APC6, ANAPC7, CDC23/APC8, ANAPC10, ANAPC11, CDC26/APC12, ANAPC13, ANAPC15 and ANAPC16 that assemble into a complex of at least 19 chains with a combined molecular mass of around 1.2 MDa; APC/C interacts with FZR1 and FBXO5. In the context of the APC/C complex, directly interacts with UBE2S. Interacts with FBXO43.

Its subcellular location is the nucleus. Its pathway is protein modification; protein ubiquitination. Its function is as follows. Component of the anaphase promoting complex/cyclosome (APC/C), a cell cycle-regulated E3 ubiquitin ligase that controls progression through mitosis and the G1 phase of the cell cycle. The APC/C complex acts by mediating ubiquitination and subsequent degradation of target proteins: it mainly mediates the formation of 'Lys-11'-linked polyubiquitin chains and, to a lower extent, the formation of 'Lys-48'- and 'Lys-63'-linked polyubiquitin chains. The APC/C complex catalyzes assembly of branched 'Lys-11'-/'Lys-48'-linked branched ubiquitin chains on target proteins. This is Anaphase-promoting complex subunit 4 (ANAPC4) from Homo sapiens (Human).